We begin with the raw amino-acid sequence, 418 residues long: eIF5-mimic protein 2 (418 aa).

Polar residues predominate over residues 1–14 (MNQKQQKPTLSGQR). Positions 1 to 25 (MNQKQQKPTLSGQRFKTRKRDEKER) are disordered. Positions 246–413 (NQQTIGARKE…KNAEEESESE (168 aa)) constitute a W2 domain.

The protein belongs to the BZW family.

Functionally, translation initiation regulator which may repress repeat-associated non-AUG (RAN) initiated translation probably by acting as a competitive inhibitor of eukaryotic translation initiation factor 5 (EIF5) function. Enhances histone H4 gene transcription but does not seem to bind DNA directly. This is eIF5-mimic protein 2 (BZW1) from Gallus gallus (Chicken).